A 969-amino-acid chain; its full sequence is Levansucrase (969 aa).

The signal sequence occupies residues 1–52 (MDITVNSQSNTVAPKQAECKKMRYSIRKVATVGATSALVGTLAFLGATQVKA). The span at 89–103 (SEAVESSVAHSEVAT) shows a compositional bias: low complexity. The tract at residues 89–169 (SEAVESSVAH…STASSEAADT (81 aa)) is disordered. The span at 106 to 116 (VTETQPSNTTP) shows a compositional bias: polar residues. Low complexity predominate over residues 124–166 (SSTVVTSSSDATTPSATVAAVSAPAHTSEAAVEAPTSTASSEA). 3 residues coordinate sucrose: Trp-286, Asp-287, and Ser-356. The active-site Nucleophile is the Asp-287. Residue Asp-443 coordinates Ca(2+). 2 residues coordinate sucrose: Arg-448 and Asp-449. Ca(2+)-binding residues include Gln-473, Asn-512, and Asp-544. Glu-545 is a sucrose binding site. Glu-547 acts as the Proton donor/acceptor in catalysis. Arg-565 is a binding site for sucrose. Disordered stretches follow at residues 746–843 (VKDG…VGDR) and 860–934 (IVAT…SEGS). Residues 747 to 758 (KDGKDKKADKPE) are compositionally biased toward basic and acidic residues. The segment covering 776-789 (KPGTSKPADNNQPS) has biased composition (polar residues). Residues 872 to 910 (VKEESVTETEAPKPVKSEEKVQSHGVDKANEVTKSDESS) are compositionally biased toward basic and acidic residues. Over residues 924 to 934 (TPKTPSDSEGS) the composition is skewed to polar residues. A helical transmembrane segment spans residues 938-958 (ILSILATIFAAIASLALLGYG).

Belongs to the glycosyl hydrolase 68 family.

It localises to the cell membrane. It is found in the cell surface. The enzyme catalyses [6)-beta-D-fructofuranosyl-(2-&gt;](n) alpha-D-glucopyranoside + sucrose = [6)-beta-D-fructofuranosyl-(2-&gt;](n+1) alpha-D-glucopyranoside + D-glucose. Ca(2+) may play an important structural role and promote stability of levansucrase. Functionally, catalyzes the synthesis of levan, a fructose polymer, by transferring the fructosyl moiety from sucrose to a growing acceptor molecule. Also displays sucrose hydrolase activity. The chain is Levansucrase from Streptococcus salivarius.